The chain runs to 131 residues: NADPH-dependent 7-cyano-7-deazaguanine reductase (131 aa).

Cys48 functions as the Thioimide intermediate in the catalytic mechanism. The Proton donor role is filled by Asp55. Residues Val70 to Leu72 and Gln89 to Glu90 each bind substrate.

This sequence belongs to the GTP cyclohydrolase I family. QueF type 1 subfamily.

It localises to the cytoplasm. It carries out the reaction 7-aminomethyl-7-carbaguanine + 2 NADP(+) = 7-cyano-7-deazaguanine + 2 NADPH + 3 H(+). It participates in tRNA modification; tRNA-queuosine biosynthesis. Catalyzes the NADPH-dependent reduction of 7-cyano-7-deazaguanine (preQ0) to 7-aminomethyl-7-deazaguanine (preQ1). The protein is NADPH-dependent 7-cyano-7-deazaguanine reductase of Caldicellulosiruptor bescii (strain ATCC BAA-1888 / DSM 6725 / KCTC 15123 / Z-1320) (Anaerocellum thermophilum).